Consider the following 412-residue polypeptide: MAKQTLGSLLSSGFDLKGKRVLVRADFNVPLDPQGNITDDTRIRASLPTIQALAQAGAKVILTSHLGRPIQKDKATGAIQIAREGNSLAPVAVRLAQLLGQPVAFAPDCIGPEAEAVVSSLENGQVALLENVRFHPEEEANDPEFARKLASLADLFVNDAFGSAHRAHASTAGVTAYLQPAVAGYLVEKELQFLSGAIENPQRPLAAIIGGSKVSTKIGVIERLLEKVDKLLLGGGMIFTFYQAQGIPTGKSLVETDKLDLARSLMEKAKARGVELLLPVDVVVADRFDKDANAQTVSIHAIPEDWMGLDIGPESVKAFQAALQGCKTVVWNGPMGVFEFDRFAAGTEAIARTLADLTQAGAITIIGGGDSVAAVEKVGLADKMTHISTGGGASLELLEGKELPGIAALSEA.

Substrate is bound by residues Asp26–Asn28, Arg42, His65–Arg68, Arg133, and Arg166. Residues Lys217, Gly308, Glu339, and Gly368–Ser371 contribute to the ATP site.

Belongs to the phosphoglycerate kinase family. Monomer.

The protein resides in the cytoplasm. The enzyme catalyses (2R)-3-phosphoglycerate + ATP = (2R)-3-phospho-glyceroyl phosphate + ADP. It participates in carbohydrate degradation; glycolysis; pyruvate from D-glyceraldehyde 3-phosphate: step 2/5. The protein is Phosphoglycerate kinase of Synechococcus sp. (strain JA-3-3Ab) (Cyanobacteria bacterium Yellowstone A-Prime).